A 570-amino-acid polypeptide reads, in one-letter code: Small ribosomal subunit protein uS2c (570 aa).

The interval 1–306 (MLNKKPPYLI…IKLNPLSTPQ (306 aa)) is N-terminal extension. TRAM domains lie at 28 to 89 (KLIP…KLIK) and 104 to 169 (ALTP…VATV).

Belongs to the universal ribosomal protein uS2 family.

Its subcellular location is the plastid. The protein resides in the chloroplast. The protein is Small ribosomal subunit protein uS2c (rps2-1) of Chlamydomonas reinhardtii (Chlamydomonas smithii).